Here is a 69-residue protein sequence, read N- to C-terminus: Protein translocase subunit SecE (69 aa).

The chain crosses the membrane as a helical span at residues 43–63; sequence VAGAGILVIGFVGFLIYVLLT.

This sequence belongs to the SecE/SEC61-gamma family. In terms of assembly, component of the Sec protein translocase complex. Heterotrimer consisting of SecY (alpha), SecG (beta) and SecE (gamma) subunits. The heterotrimers can form oligomers, although 1 heterotrimer is thought to be able to translocate proteins. Interacts with the ribosome. May interact with SecDF, and other proteins may be involved.

The protein localises to the cell membrane. Its function is as follows. Essential subunit of the Sec protein translocation channel SecYEG. Clamps together the 2 halves of SecY. May contact the channel plug during translocation. The protein is Protein translocase subunit SecE of Methanococcoides burtonii (strain DSM 6242 / NBRC 107633 / OCM 468 / ACE-M).